A 123-amino-acid chain; its full sequence is Large ribosomal subunit protein bL12 (123 aa).

The protein belongs to the bacterial ribosomal protein bL12 family. Homodimer. Part of the ribosomal stalk of the 50S ribosomal subunit. Forms a multimeric L10(L12)X complex, where L10 forms an elongated spine to which 2 to 4 L12 dimers bind in a sequential fashion. Binds GTP-bound translation factors.

Forms part of the ribosomal stalk which helps the ribosome interact with GTP-bound translation factors. Is thus essential for accurate translation. The polypeptide is Large ribosomal subunit protein bL12 (Geobacillus kaustophilus (strain HTA426)).